We begin with the raw amino-acid sequence, 177 residues long: uncharacterized protein (177 aa).

This sequence belongs to the flavoredoxin family. It depends on FMN as a cofactor.

This is an uncharacterized protein from Archaeoglobus fulgidus (strain ATCC 49558 / DSM 4304 / JCM 9628 / NBRC 100126 / VC-16).